Here is a 380-residue protein sequence, read N- to C-terminus: Flap endonuclease 1 (380 aa).

Residues 1–104 are N-domain; the sequence is MGIQGLAKLI…GELAKRSERR (104 aa). At R19 the chain carries Symmetric dimethylarginine; by PRMT5. Residue D34 participates in Mg(2+) binding. R47 and R70 together coordinate DNA. An N6-acetyllysine modification is found at K80. Mg(2+) is bound at residue D86. Residues R100 and R104 each carry the symmetric dimethylarginine; by PRMT5 modification. Residues 122–253 form an I-domain region; sequence EVEKFTKRLV…KRAVDLIQKH (132 aa). Residues E158, E160, D179, and D181 each contribute to the Mg(2+) site. Position 158 (E158) interacts with DNA. A Phosphoserine; by CDK2 modification is found at S187. R192 bears the Symmetric dimethylarginine; by PRMT5 mark. A Phosphoserine modification is found at S197. DNA contacts are provided by G231 and D233. D233 lines the Mg(2+) pocket. S255, S293, and S335 each carry phosphoserine. Positions 327-380 are disordered; sequence RLSKSRQGSTQGRLDDFFKVTGSLSSAKRKEPEPKGSTKKKAKTGAAGKFKRGK. Position 336 is a phosphothreonine (T336). Positions 336-344 are interaction with PCNA; the sequence is TQGRLDDFF. N6-acetyllysine is present on K354. Over residues 363-380 the composition is skewed to basic residues; that stretch reads STKKKAKTGAAGKFKRGK. A Phosphothreonine modification is found at T364. N6-acetyllysine is present on residues K375, K377, and K380.

This sequence belongs to the XPG/RAD2 endonuclease family. FEN1 subfamily. As to quaternary structure, interacts with PCNA. Three molecules of FEN1 bind to one PCNA trimer with each molecule binding to one PCNA monomer. PCNA stimulates the nuclease activity without altering cleavage specificity. The C-terminal domain binds EP300; can bind simultaneously to both PCNA and EP300. Interacts with DDX11; this interaction is direct and increases flap endonuclease activity of FEN1. Interacts with WDR4; regulating its endonuclease activity. Interacts with POLB. The cofactor is Mg(2+). Acetylated by EP300. Acetylation inhibits both endonuclease and exonuclease activity. Acetylation also reduces DNA-binding activity but does not affect interaction with PCNA or EP300. In terms of processing, phosphorylation upon DNA damage induces relocalization to the nuclear plasma. Phosphorylation at Ser-187 by CDK2 occurs during late S-phase and results in dissociation from PCNA. Post-translationally, methylation at Arg-192 by PRMT5 impedes Ser-187 phosphorylation and increases interaction with PCNA.

The protein resides in the nucleus. Its subcellular location is the nucleolus. It localises to the nucleoplasm. The protein localises to the mitochondrion. Its function is as follows. Structure-specific nuclease with 5'-flap endonuclease and 5'-3' exonuclease activities involved in DNA replication and repair. During DNA replication, cleaves the 5'-overhanging flap structure that is generated by displacement synthesis when DNA polymerase encounters the 5'-end of a downstream Okazaki fragment. It enters the flap from the 5'-end and then tracks to cleave the flap base, leaving a nick for ligation. Also involved in the long patch base excision repair (LP-BER) pathway, by cleaving within the apurinic/apyrimidinic (AP) site-terminated flap. Acts as a genome stabilization factor that prevents flaps from equilibrating into structures that lead to duplications and deletions. Also possesses 5'-3' exonuclease activity on nicked or gapped double-stranded DNA, and exhibits RNase H activity. Also involved in replication and repair of rDNA and in repairing mitochondrial DNA. This is Flap endonuclease 1 from Macaca fascicularis (Crab-eating macaque).